We begin with the raw amino-acid sequence, 193 residues long: Interferon lambda-3 (193 aa).

An N-terminal signal peptide occupies residues 1-19 (MLLLLLPLLLAAVLTRTQA). 3 disulfide bridges follow: C35–C132, C69–C166, and C185–C192.

Belongs to the lambda interferon family.

It localises to the secreted. Its function is as follows. Cytokine with antiviral, antitumour and immunomodulatory activities. Plays a critical role in the antiviral host defense, predominantly in the epithelial tissues. Acts as a ligand for the heterodimeric class II cytokine receptor composed of IL10RB and IFNLR1, and receptor engagement leads to the activation of the JAK/STAT signaling pathway resulting in the expression of IFN-stimulated genes (ISG), which mediate the antiviral state. Has a restricted receptor distribution and therefore restricted targets: is primarily active in epithelial cells and this cell type-selective action is because of the epithelial cell-specific expression of its receptor IFNLR1. Seems not to be essential for early virus-activated host defense in vaginal infection, but plays an important role in Toll-like receptor (TLR)-induced antiviral defense. Plays a significant role in the antiviral immune defense in the intestinal epithelium. Exerts an immunomodulatory effect by up-regulating MHC class I antigen expression. This is Interferon lambda-3 (Ifnl3) from Mus musculus (Mouse).